Reading from the N-terminus, the 280-residue chain is Probable aquaporin PIP2-8 (280 aa).

The tract at residues 1–21 (MAAGSGSGSNPKDYQDPPPAP) is disordered. 2 helical membrane passes run 36-56 (AAIA…STVI) and 70-92 (LGIA…GISG). The NPA 1 signature appears at 96 to 98 (NPA). 3 consecutive transmembrane segments (helical) span residues 113–135 (RAAL…ARAM), 156–176 (SAGA…YTVF), and 192–212 (VLAP…TIPI). An NPA 2 motif is present at residues 218-220 (NPA). A helical transmembrane segment spans residues 236–256 (AWSHLWIFWVGPFAGAAAAMI).

This sequence belongs to the MIP/aquaporin (TC 1.A.8) family. PIP (TC 1.A.8.11) subfamily. Expressed in leaves and at lower levels in roots.

The protein resides in the cell membrane. Functionally, aquaporins facilitate the transport of water and small neutral solutes across cell membranes. This is Probable aquaporin PIP2-8 (PIP2-8) from Oryza sativa subsp. japonica (Rice).